The primary structure comprises 863 residues: Paramyosin (863 aa).

Residues 1–26 form a nonhelical region region; it reads MSESHVKISRTIIRGTSPSTVRLESP. A coiled-coil region spans residues 27 to 836; the sequence is VRELEDLLDL…ERTITIKRTI (810 aa). The interval 837–863 is nonhelical region; sequence GGPGSRAVSVVREINSVSRGNRATSIM.

It belongs to the paramyosin family. In terms of assembly, homodimer.

The protein localises to the cytoplasm. The protein resides in the myofibril. Its function is as follows. Paramyosin is a major structural component of many thick filaments isolated from invertebrate muscles. This chain is Paramyosin, found in Echinococcus granulosus (Hydatid tapeworm).